Reading from the N-terminus, the 434-residue chain is Tubulin gamma chain (434 aa).

135-141 (AGGTGSG) serves as a coordination point for GTP.

The protein belongs to the tubulin family.

It is found in the cytoplasm. Its subcellular location is the cytoskeleton. The protein localises to the microtubule organizing center. The protein resides in the spindle pole body. Tubulin is the major constituent of microtubules. The gamma chain is found at microtubule organizing centers (MTOC) such as the spindle poles or the centrosome, suggesting that it is involved in the minus-end nucleation of microtubule assembly. This is Tubulin gamma chain (TUB4) from Encephalitozoon cuniculi (strain GB-M1) (Microsporidian parasite).